The chain runs to 205 residues: Large ribosomal subunit protein uL4 (205 aa).

The segment at 54-78 (GDISGTTAKPHRQKHTGRARQGSLR) is disordered. Over residues 62–71 (KPHRQKHTGR) the composition is skewed to basic residues.

Belongs to the universal ribosomal protein uL4 family. As to quaternary structure, part of the 50S ribosomal subunit.

Functionally, one of the primary rRNA binding proteins, this protein initially binds near the 5'-end of the 23S rRNA. It is important during the early stages of 50S assembly. It makes multiple contacts with different domains of the 23S rRNA in the assembled 50S subunit and ribosome. Forms part of the polypeptide exit tunnel. This Ehrlichia chaffeensis (strain ATCC CRL-10679 / Arkansas) protein is Large ribosomal subunit protein uL4.